Reading from the N-terminus, the 190-residue chain is Cytoplasmic envelopment protein 3 (190 aa).

The N-myristoyl glycine; by host moiety is linked to residue Gly-2. The interval 14 to 190 (GTTSGEPLKD…TKKPAASLPF (177 aa)) is disordered. The segment covering 30-43 (SLRSYDNIPPTSSS) has biased composition (polar residues). Residues 44 to 58 (DEGEDDDDGEDDDNE) show a composition bias toward acidic residues. The segment covering 80–90 (SHREATHDGPK) has biased composition (basic and acidic residues). Residues 108-123 (KQSKKKKKPSKHHHHQ) are compositionally biased toward basic residues. A compositionally biased stretch (acidic residues) spans 130–139 (ETDDLDEEDT).

The protein belongs to the herpesviridae cytoplasmic envelopment protein 3 family. Interacts with cytoplasmic envelopment protein 2; this interaction is essential for the proper localization of each protein to the assembly complex and thus for the production of infectious virus. Post-translationally, myristoylation and palmitoylation (probably on one or more of the nearby cysteines at the N-terminus) enable membrane-binding and Golgi apparatus-specific targeting and are essential for efficient packaging. In terms of processing, phosphorylated. Phosphorylation does not seem to be required for recycling to the host Golgi apparatus. Packaging is selective for underphosphorylated forms.

It localises to the virion tegument. The protein resides in the virion membrane. It is found in the host cell membrane. The protein localises to the host Golgi apparatus membrane. In terms of biological role, plays an important role in the cytoplasmic envelopment of tegument proteins and capsids during the assembly and egress processes. Also participates in viral entry at the fusion step probably by regulating the core fusion machinery. The polypeptide is Cytoplasmic envelopment protein 3 (UL99) (Human cytomegalovirus (strain Merlin) (HHV-5)).